Consider the following 283-residue polypeptide: Pantothenate synthetase (283 aa).

ATP is bound at residue 30-37; sequence MGALHEGH. The active-site Proton donor is the histidine 37. Glutamine 61 lines the (R)-pantoate pocket. Glutamine 61 contacts beta-alanine. Position 147-150 (147-150) interacts with ATP; sequence GEKD. Glutamine 153 is a (R)-pantoate binding site. Residues isoleucine 176 and 184–187 contribute to the ATP site; that span reads VSSR.

Belongs to the pantothenate synthetase family. As to quaternary structure, homodimer.

Its subcellular location is the cytoplasm. It catalyses the reaction (R)-pantoate + beta-alanine + ATP = (R)-pantothenate + AMP + diphosphate + H(+). It participates in cofactor biosynthesis; (R)-pantothenate biosynthesis; (R)-pantothenate from (R)-pantoate and beta-alanine: step 1/1. Catalyzes the condensation of pantoate with beta-alanine in an ATP-dependent reaction via a pantoyl-adenylate intermediate. The polypeptide is Pantothenate synthetase (Chlorobium phaeobacteroides (strain DSM 266 / SMG 266 / 2430)).